We begin with the raw amino-acid sequence, 506 residues long: MSGKVDKKKGSSVKKTEGKSKEISALAAKIRAKALENQKKMLKNSETTSDQEDDPSESEEEEGSDSEDVEVSKDKQEEEEEGETFESFSDLDLVPELIEACKNLNFAKPTPIQARSIPPALQGHDIIGLAQTGSGKTAAFAIPILNRLWHDQQPYYACILAPTRELAQQIKETFDSLGSLMGVRSACIVGGMNMMDQARDLMRKPHIIIATPGRLMDHLENTRGFSLRKLKFLVMDEADRLLDMEFGPVLDRILKIIPTQGRTTYLFSATMTSKIDKLQRASLTNPVKCAVSNKYQTVDTLVQTLIVVPGGLKNTYLIYLMNEFIGKTIIVFTRTKANAERITTLANLLEFSATALHGDLNQNQRTGSLDLFKAGRRSILVATDVAARGLDIPSVDIVINYDIPVDSKSYIHRVGRTARAGRSGKSISLVSQYDLELILRIEDVLGKKLPKENVNKDAILTLRDSVDKANGEVVMELNRRNKEKIARGKGRRGRMAARDDMDKGER.

Disordered regions lie at residues 1–22 and 37–88; these read MSGK…KSKE and NQKK…FESF. Over residues 49–69 the composition is skewed to acidic residues; it reads SDQEDDPSESEEEEGSDSEDV. The Q motif signature appears at 86 to 114; that stretch reads ESFSDLDLVPELIEACKNLNFAKPTPIQA. Residues 117–289 enclose the Helicase ATP-binding domain; it reads IPPALQGHDI…RASLTNPVKC (173 aa). 130-137 is a binding site for ATP; the sequence is AQTGSGKT. Residues 236–239 carry the DEAD box motif; that stretch reads DEAD. Residues 312 to 460 form the Helicase C-terminal domain; the sequence is LKNTYLIYLM…KENVNKDAIL (149 aa). The interval 485-506 is disordered; it reads IARGKGRRGRMAARDDMDKGER. The segment covering 496-506 has biased composition (basic and acidic residues); it reads AARDDMDKGER.

It belongs to the DEAD box helicase family. DDX47/RRP3 subfamily. As to quaternary structure, interacts with the SSU processome.

Its subcellular location is the nucleus. It catalyses the reaction ATP + H2O = ADP + phosphate + H(+). ATP-dependent rRNA helicase required for pre-ribosomal RNA processing. Involved in the maturation of the 35S-pre-rRNA and to its cleavage to mature 18S rRNA. This chain is ATP-dependent rRNA helicase RRP3, found in Vanderwaltozyma polyspora (strain ATCC 22028 / DSM 70294 / BCRC 21397 / CBS 2163 / NBRC 10782 / NRRL Y-8283 / UCD 57-17) (Kluyveromyces polysporus).